We begin with the raw amino-acid sequence, 132 residues long: Small ribosomal subunit protein uS8c (132 aa).

This sequence belongs to the universal ribosomal protein uS8 family. As to quaternary structure, part of the 30S ribosomal subunit.

Its subcellular location is the plastid. The protein resides in the chloroplast. One of the primary rRNA binding proteins, it binds directly to 16S rRNA central domain where it helps coordinate assembly of the platform of the 30S subunit. The chain is Small ribosomal subunit protein uS8c (rps8) from Ceratophyllum demersum (Rigid hornwort).